The chain runs to 1997 residues: Autophagy-related protein 2 homolog A (1997 aa).

Positions cysteine 17–glutamine 119 constitute a Chorein N-terminal domain. Disordered regions lie at residues threonine 241 to isoleucine 281, histidine 1292 to alanine 1323, glutamate 1371 to aspartate 1414, serine 1492 to glycine 1534, and arginine 1684 to aspartate 1718. The segment covering proline 1311–leucine 1321 has biased composition (pro residues). Polar residues-rich tracts occupy residues arginine 1393–serine 1408, serine 1493–glutamine 1532, and lysine 1690–aspartate 1718.

It belongs to the ATG2 family.

It localises to the preautophagosomal structure membrane. The protein localises to the lipid droplet. It is found in the endoplasmic reticulum membrane. The catalysed reaction is a 1,2-diacyl-sn-glycero-3-phospho-L-serine(in) = a 1,2-diacyl-sn-glycero-3-phospho-L-serine(out). The enzyme catalyses a 1,2-diacyl-sn-glycero-3-phosphoethanolamine(in) = a 1,2-diacyl-sn-glycero-3-phosphoethanolamine(out). Functionally, lipid transfer protein involved in autophagosome assembly. Tethers the edge of the isolation membrane (IM) to the endoplasmic reticulum (ER) and mediates direct lipid transfer from ER to IM for IM expansion. Binds to the ER exit site (ERES), which is the membrane source for autophagosome formation, and extracts phospholipids from the membrane source and transfers them to atg9 (atg9a or atg9b) to the IM for membrane expansion. Also regulates lipid droplets morphology and distribution within the cell. The sequence is that of Autophagy-related protein 2 homolog A from Xenopus tropicalis (Western clawed frog).